A 523-amino-acid chain; its full sequence is Glutamate--cysteine ligase (523 aa).

It belongs to the glutamate--cysteine ligase type 1 family. Type 1 subfamily.

The enzyme catalyses L-cysteine + L-glutamate + ATP = gamma-L-glutamyl-L-cysteine + ADP + phosphate + H(+). It participates in sulfur metabolism; glutathione biosynthesis; glutathione from L-cysteine and L-glutamate: step 1/2. The protein is Glutamate--cysteine ligase of Baumannia cicadellinicola subsp. Homalodisca coagulata.